The primary structure comprises 387 residues: DNA-damage-repair/toleration protein 111 (387 aa).

The interval 1-213 (MLGGLYGDLP…TSGLGVGAGG (213 aa)) is disordered. Residues 19–29 (SGNSSSVWSSS) show a composition bias toward low complexity. A compositionally biased stretch (basic and acidic residues) spans 103 to 158 (DPARPNDYEEYKREKKRKATEAEMKREMDKRRQEDEERDKREREEREKERERDNSD). The region spanning 214 to 260 (QMTAAQRMMAKMGWKQGQGLGKSEQGITTPLMAKKTDRRAGVIVNAS) is the G-patch domain. The 87-residue stretch at 283–369 (RVLLLRNMVG…RTVRATFYDE (87 aa)) folds into the RRM domain.

In terms of assembly, component of the SWAP1-SFPS-RRC1 splicing factor complex which modulates pre-mRNA splicing to promote photomorphogenesis. Interacts with SWAP1 in a light-independent manner. Associates with the photoreceptor phytochrome B (phyB) in nuclear photobodies upon response to red light. Binds to the splicing factor 1 SF1, involved in 3' splicing site recognition. In terms of tissue distribution, expressed ubiquitously with highest levels in dry seeds and in cells surrounding the base of trichomes and guard cells.

The protein localises to the nucleus. It localises to the nucleus speckle. Functionally, as a member of the SWAP1-SFPS-RRC1 splicing factor complex, modulates photomorphogenesis by regulating the gene expression and pre-messenger RNA (mRNA) alternative splicing of a large number of genes, including those involved in plant responses to light signaling, probably by helping in the 3' splice site determination. Associates with and regulates EARLY FLOWERING 3 (ELF3) mRNA processing, a key component of the circadian clock also involved in photomorphogenesis. Required for light-regulated (red, far-red and blue lights) photomorphogenesis in a PHYB- and PHYTOCHROME INTERACTING FACTORS- (PIFs) dependent manner. Promotes flowering under both short (SD) and long days (LD). Controls abscisic acid (ABA) sensitivity during seed development, stomatal responsiveness and germination by monitoring ABI3 splicing, upstream of the splicing factor SUPPRESSOR OF ABI3-ABI5. Seems to be involved in the resistance to UV light and chemical DNA-damaging agents. The polypeptide is DNA-damage-repair/toleration protein 111 (Arabidopsis thaliana (Mouse-ear cress)).